A 284-amino-acid polypeptide reads, in one-letter code: Tropomyosin alpha-1 chain (284 aa).

The disordered stretch occupies residues 1–38 (MDAIKKKMQMLKLDKENALDRAEQAEADKKAAEERSKQ). The stretch at 1-284 (MDAIKKKMQM…DHALNDMTSI (284 aa)) forms a coiled coil. A compositionally biased stretch (basic and acidic residues) spans 12–38 (KLDKENALDRAEQAEADKKAAEERSKQ).

It belongs to the tropomyosin family. In terms of assembly, homodimer. Heterodimer of an alpha (TPM1, TPM3 or TPM4) and a beta (TPM2) chain. Interacts with HRG (via the HRR domain); the interaction contributes to the antiangiogenic properties of the histidine/proline-rich region (HRR) of HRG.

Its subcellular location is the cytoplasm. It is found in the cytoskeleton. In terms of biological role, binds to actin filaments in muscle and non-muscle cells. Plays a central role, in association with the troponin complex, in the calcium dependent regulation of vertebrate striated muscle contraction. Smooth muscle contraction is regulated by interaction with caldesmon. In non-muscle cells is implicated in stabilizing cytoskeleton actin filaments. The polypeptide is Tropomyosin alpha-1 chain (TPM1) (Coturnix japonica (Japanese quail)).